A 76-amino-acid polypeptide reads, in one-letter code: UPF0291 protein Aflv_1503 (76 aa).

A disordered region spans residues 56-76 (DPNGNDVTPQKLKDSKKKRLH).

The protein belongs to the UPF0291 family.

It localises to the cytoplasm. The protein is UPF0291 protein Aflv_1503 of Anoxybacillus flavithermus (strain DSM 21510 / WK1).